Reading from the N-terminus, the 555-residue chain is Potassium-transporting ATPase potassium-binding subunit (555 aa).

10 helical membrane-spanning segments follow: residues 2–22 (IWVA…PTGI), 60–80 (QYAL…YFIF), 130–150 (IGIT…VMAF), 173–193 (VFLP…VPQT), 246–266 (MSNI…PFTY), 278–298 (ILFV…TTSE), 374–394 (AGFV…GLMV), 412–432 (LIAV…ALAL), 483–503 (LVMF…AASL), and 525–545 (GIFI…MLVL).

It belongs to the KdpA family. The system is composed of three essential subunits: KdpA, KdpB and KdpC.

It localises to the cell membrane. Part of the high-affinity ATP-driven potassium transport (or Kdp) system, which catalyzes the hydrolysis of ATP coupled with the electrogenic transport of potassium into the cytoplasm. This subunit binds the extracellular potassium ions and delivers the ions to the membrane domain of KdpB through an intramembrane tunnel. This chain is Potassium-transporting ATPase potassium-binding subunit, found in Bacillus thuringiensis (strain Al Hakam).